The chain runs to 404 residues: Cysteine desulfurase IscS (404 aa).

Pyridoxal 5'-phosphate-binding positions include 75 to 76 (AT), Asn-155, Gln-183, and 203 to 205 (SGH). N6-(pyridoxal phosphate)lysine is present on Lys-206. Residue Thr-243 coordinates pyridoxal 5'-phosphate. Cys-328 (cysteine persulfide intermediate) is an active-site residue. Residue Cys-328 participates in [2Fe-2S] cluster binding.

This sequence belongs to the class-V pyridoxal-phosphate-dependent aminotransferase family. NifS/IscS subfamily. Homodimer. Forms a heterotetramer with IscU, interacts with other sulfur acceptors. Pyridoxal 5'-phosphate is required as a cofactor.

The protein resides in the cytoplasm. It carries out the reaction (sulfur carrier)-H + L-cysteine = (sulfur carrier)-SH + L-alanine. Its pathway is cofactor biosynthesis; iron-sulfur cluster biosynthesis. Master enzyme that delivers sulfur to a number of partners involved in Fe-S cluster assembly, tRNA modification or cofactor biosynthesis. Catalyzes the removal of elemental sulfur atoms from cysteine to produce alanine. Functions as a sulfur delivery protein for Fe-S cluster synthesis onto IscU, an Fe-S scaffold assembly protein, as well as other S acceptor proteins. The chain is Cysteine desulfurase IscS from Mannheimia succiniciproducens (strain KCTC 0769BP / MBEL55E).